The chain runs to 68 residues: Gallinacin-10 (68 aa).

The signal sequence occupies residues 1–19 (MKILCLLFAVLLFLFQAAP). A propeptide spanning residues 20–25 (GSADPL) is cleaved from the precursor. 3 cysteine pairs are disulfide-bonded: Cys-32-Cys-61, Cys-39-Cys-54, and Cys-44-Cys-62.

Belongs to the beta-defensin family. In terms of tissue distribution, strong expression in the testis, liver, gall bladder and kidney. Also expressed in the ovary and male and female reproductive tracts. Expressed in the ovarian stroma and the theca and granulosa layers of the ovarian follicle.

It is found in the secreted. Its subcellular location is the cytoplasmic granule. Has bactericidal activity. The polypeptide is Gallinacin-10 (GAL10) (Gallus gallus (Chicken)).